A 151-amino-acid chain; its full sequence is Acidic phospholipase A2 3 (151 aa).

Positions 1–27 (MYPAHLLVLLAVCVSLLGAASIPARPL) are cleaved as a signal peptide. 7 cysteine pairs are disulfide-bonded: Cys38-Cys104, Cys54-Cys151, Cys56-Cys72, Cys71-Cys132, Cys78-Cys125, Cys88-Cys118, and Cys111-Cys123. 3 residues coordinate Ca(2+): Tyr55, Gly57, and Gly59. Residue His75 is part of the active site. Asp76 serves as a coordination point for Ca(2+). The active site involves Asp126.

It belongs to the phospholipase A2 family. Group I subfamily. D49 sub-subfamily. The cofactor is Ca(2+). As to expression, expressed by the venom gland.

The protein resides in the secreted. The enzyme catalyses a 1,2-diacyl-sn-glycero-3-phosphocholine + H2O = a 1-acyl-sn-glycero-3-phosphocholine + a fatty acid + H(+). In terms of biological role, PLA2 catalyzes the calcium-dependent hydrolysis of the 2-acyl groups in 3-sn-phosphoglycerides. The polypeptide is Acidic phospholipase A2 3 (Tropidechis carinatus (Australian rough-scaled snake)).